A 111-amino-acid polypeptide reads, in one-letter code: MAQADMVRISVCYARPDSVFLKEFDVLQGTTIAAAIVSSGVQQVCPEIDPSTMRVGIYGKLKTPDTVVRTGDRVEIYRALTADPKLARRRRVQKTRESGTREGQKWLRGGA.

Residues 88–111 (RRRRVQKTRESGTREGQKWLRGGA) are disordered. Residues 94–105 (KTRESGTREGQK) are compositionally biased toward basic and acidic residues.

The protein belongs to the UPF0125 (RnfH) family.

The protein is Protein RnfH of Cupriavidus pinatubonensis (strain JMP 134 / LMG 1197) (Cupriavidus necator (strain JMP 134)).